An 89-amino-acid polypeptide reads, in one-letter code: Small ribosomal subunit protein uS19 (89 aa).

It belongs to the universal ribosomal protein uS19 family.

In terms of biological role, protein S19 forms a complex with S13 that binds strongly to the 16S ribosomal RNA. The polypeptide is Small ribosomal subunit protein uS19 (Xylella fastidiosa (strain 9a5c)).